The primary structure comprises 123 residues: MPRATLPPEARLHRPSEFAAALKGRRLARGAFFILSAAPSSPPPGQAAQARLGMVIAKRYAAHASTRNALKRVIREAFRHCRLELPPQDYVLRLHSKPAPATLTSLKRLARAEVDAHFARVRP.

The protein belongs to the RnpA family. In terms of assembly, consists of a catalytic RNA component (M1 or rnpB) and a protein subunit.

It catalyses the reaction Endonucleolytic cleavage of RNA, removing 5'-extranucleotides from tRNA precursor.. Its function is as follows. RNaseP catalyzes the removal of the 5'-leader sequence from pre-tRNA to produce the mature 5'-terminus. It can also cleave other RNA substrates such as 4.5S RNA. The protein component plays an auxiliary but essential role in vivo by binding to the 5'-leader sequence and broadening the substrate specificity of the ribozyme. The polypeptide is Ribonuclease P protein component (Bordetella petrii (strain ATCC BAA-461 / DSM 12804 / CCUG 43448)).